We begin with the raw amino-acid sequence, 264 residues long: Thymidylate synthase (264 aa).

Position 21 (Arg-21) interacts with dUMP. His-51 is a binding site for (6R)-5,10-methylene-5,6,7,8-tetrahydrofolate. A dUMP-binding site is contributed by Arg-126–Arg-127. Cys-146 functions as the Nucleophile in the catalytic mechanism. DUMP is bound by residues Arg-166–Asp-169, Asn-177, and His-207–Tyr-209. Position 169 (Asp-169) interacts with (6R)-5,10-methylene-5,6,7,8-tetrahydrofolate. A (6R)-5,10-methylene-5,6,7,8-tetrahydrofolate-binding site is contributed by Ala-263.

Belongs to the thymidylate synthase family. Bacterial-type ThyA subfamily. Homodimer.

The protein localises to the cytoplasm. The catalysed reaction is dUMP + (6R)-5,10-methylene-5,6,7,8-tetrahydrofolate = 7,8-dihydrofolate + dTMP. The protein operates within pyrimidine metabolism; dTTP biosynthesis. In terms of biological role, catalyzes the reductive methylation of 2'-deoxyuridine-5'-monophosphate (dUMP) to 2'-deoxythymidine-5'-monophosphate (dTMP) while utilizing 5,10-methylenetetrahydrofolate (mTHF) as the methyl donor and reductant in the reaction, yielding dihydrofolate (DHF) as a by-product. This enzymatic reaction provides an intracellular de novo source of dTMP, an essential precursor for DNA biosynthesis. This chain is Thymidylate synthase, found in Bacteroides thetaiotaomicron (strain ATCC 29148 / DSM 2079 / JCM 5827 / CCUG 10774 / NCTC 10582 / VPI-5482 / E50).